Here is a 381-residue protein sequence, read N- to C-terminus: MTLQENELIKIRRDLHQIPEIGLEEYETSDYLLKIINGLPQENLEIKRWKTAILVHLNGENKNYTIGYRTDIDGLPVEEKTGLPFSSKHEGRMHACGHDIHMTVALGVLSYFASHRPKYNMTFIFQPAEENASGGMKLYQSGELDEWMPDEIYALHDNPQLPAGTIGCRKGTLFAGTCEIHVKFIGKSGHAAYPHQANDMVVAGAQFVNQIQTIVSRNVDPIQSVVVTLGHFSAGTTGNVISGVCQIDGTIRALTQENNLLIQKRVRTIAEGIAHSFDCELEIDLHQGGYYPVENDDNTTEAFINYMKNEDDVDFVETLPAMTGEDFGYLISKIPGTMFWLGVDSPYSLHSEYLAPKEESIMLGVNAITGYLKNRQESLNK.

Residue D71 is part of the active site. Residue E130 is the Proton acceptor of the active site.

It belongs to the peptidase M20A family. N-acetyldiaminopimelate deacetylase subfamily.

It catalyses the reaction N-acetyl-(2S,6S)-2,6-diaminopimelate + H2O = (2S,6S)-2,6-diaminopimelate + acetate. It functions in the pathway amino-acid biosynthesis; L-lysine biosynthesis via DAP pathway; LL-2,6-diaminopimelate from (S)-tetrahydrodipicolinate (acetylase route): step 3/3. Catalyzes the conversion of N-acetyl-diaminopimelate to diaminopimelate and acetate. The sequence is that of N-acetyldiaminopimelate deacetylase from Ligilactobacillus salivarius (strain UCC118) (Lactobacillus salivarius).